A 108-amino-acid polypeptide reads, in one-letter code: Nucleoid-associated protein HEAR1046 (108 aa).

Positions 86–108 are disordered; the sequence is TSQEKMAGATAGMPMPPGFKMPF. The span at 99 to 108 shows a compositional bias: pro residues; it reads PMPPGFKMPF.

It belongs to the YbaB/EbfC family. As to quaternary structure, homodimer.

It is found in the cytoplasm. It localises to the nucleoid. In terms of biological role, binds to DNA and alters its conformation. May be involved in regulation of gene expression, nucleoid organization and DNA protection. The chain is Nucleoid-associated protein HEAR1046 from Herminiimonas arsenicoxydans.